Here is a 360-residue protein sequence, read N- to C-terminus: Spermidine/putrescine-binding periplasmic protein 1 (360 aa).

Positions 1 to 16 are cleaved as a signal peptide; that stretch reads MKKFAGLITASFVAAT.

Belongs to the bacterial solute-binding protein PotD/PotF family.

The protein localises to the periplasm. In terms of biological role, required for the activity of the bacterial periplasmic transport system of putrescine and spermidine. Polyamine binding protein. In Haemophilus influenzae (strain ATCC 51907 / DSM 11121 / KW20 / Rd), this protein is Spermidine/putrescine-binding periplasmic protein 1 (potD-B).